Here is a 150-residue protein sequence, read N- to C-terminus: Ribosome-binding factor A (150 aa).

Residues 119–150 (VAERAKSAQPAGEPDPYRFDGAAAADDDEPAT) are disordered.

The protein belongs to the RbfA family. As to quaternary structure, monomer. Binds 30S ribosomal subunits, but not 50S ribosomal subunits or 70S ribosomes.

The protein resides in the cytoplasm. In terms of biological role, one of several proteins that assist in the late maturation steps of the functional core of the 30S ribosomal subunit. Associates with free 30S ribosomal subunits (but not with 30S subunits that are part of 70S ribosomes or polysomes). Required for efficient processing of 16S rRNA. May interact with the 5'-terminal helix region of 16S rRNA. The chain is Ribosome-binding factor A from Acidothermus cellulolyticus (strain ATCC 43068 / DSM 8971 / 11B).